The primary structure comprises 136 residues: uncharacterized protein (136 aa).

The disordered stretch occupies residues 1-100 (MQSREPSGWR…PCSGGPDRPE (100 aa)). Over residues 66-75 (RLLRWHHRVP) the composition is skewed to basic residues.

This is an uncharacterized protein from Homo sapiens (Human).